A 282-amino-acid polypeptide reads, in one-letter code: MELIQCIDEMQSIAQAARANGKRIALVPTMGYLHQGHASLMVEGQKRADLLVASIFVNPTQFGVGEDFDSYPRDMENDMRIAEAAGVDLIFAPRAADMYPADYQTYVNVEELTLPLCGANRPGHFRGVTTVVAKFFNIVSPHVALFGQKDYQQLAVIRQMVADLNMPVEVIGMPIVREADGLAMSSRNSYLSPAERVSALCLSNSLNAVRTAFCKGERSVAALKNLVLDMISKERCAAIDYVEFRHGLNLAAVDTADEQTVVALAVKIGKTRLIDNRVLGEE.

Residue 30 to 37 coordinates ATP; the sequence is MGYLHQGH. His37 (proton donor) is an active-site residue. Gln61 lines the (R)-pantoate pocket. Gln61 is a binding site for beta-alanine. Residue 147-150 participates in ATP binding; that stretch reads GQKD. Gln153 serves as a coordination point for (R)-pantoate. ATP is bound by residues Val176 and 184-187; that span reads MSSR.

It belongs to the pantothenate synthetase family. As to quaternary structure, homodimer.

Its subcellular location is the cytoplasm. The catalysed reaction is (R)-pantoate + beta-alanine + ATP = (R)-pantothenate + AMP + diphosphate + H(+). The protein operates within cofactor biosynthesis; (R)-pantothenate biosynthesis; (R)-pantothenate from (R)-pantoate and beta-alanine: step 1/1. In terms of biological role, catalyzes the condensation of pantoate with beta-alanine in an ATP-dependent reaction via a pantoyl-adenylate intermediate. In Geotalea daltonii (strain DSM 22248 / JCM 15807 / FRC-32) (Geobacter daltonii), this protein is Pantothenate synthetase.